We begin with the raw amino-acid sequence, 183 residues long: Peptidoglycan recognition protein 1 (183 aa).

An N-terminal signal peptide occupies residues 1–17; it reads MLFAWAPFPALLGLADS. 3 disulfides stabilise this stretch: Cys18–Cys142, Cys34–Cys79, and Cys55–Cys61. Residues 40-168 form the N-acetylmuramoyl-L-alanine amidase domain; sequence KPVRYVVISH…RDVQSTLSPG (129 aa).

The protein belongs to the N-acetylmuramoyl-L-alanine amidase 2 family. As to expression, expressed in all regions of the brain.

It localises to the secreted. The protein localises to the cytoplasmic granule. In terms of biological role, innate immunity protein that plays several important functions in antimicrobial and antitumor defense systems. Acts as a pattern receptor that binds to murein peptidoglycans (PGN) of Gram-positive bacteria and thus provides bactericidal activity. Forms an equimolar complex with heat shock protein HSPA1A and induces programmed cell death through apoptosis and necroptosis in tumor cell lines by activating the TNFR1 receptor on the target cell membrane. In addition, acts in complex with the Ca(2+)-binding protein S100A4 as a chemoattractant able to induce lymphocyte movement. Mechanistically, this complex acts as a ligand of the chemotactic receptors CCR5 and CXCR3 which are present on the cells of the immune system. Promotes also the activation of lymphocytes that become able to kill virus-infected cells as well as tumor cells by modulating the spectrum of their target-cell specificity. Induction of cytotoxicity on monocyte surface requires interaction with TREM1 receptor. The chain is Peptidoglycan recognition protein 1 (Pglyrp1) from Rattus norvegicus (Rat).